The following is a 206-amino-acid chain: Uridine kinase (206 aa).

11–18 contributes to the ATP binding site; the sequence is GGTGSGKS.

It belongs to the uridine kinase family.

Its subcellular location is the cytoplasm. It catalyses the reaction uridine + ATP = UMP + ADP + H(+). The catalysed reaction is cytidine + ATP = CMP + ADP + H(+). It functions in the pathway pyrimidine metabolism; CTP biosynthesis via salvage pathway; CTP from cytidine: step 1/3. Its pathway is pyrimidine metabolism; UMP biosynthesis via salvage pathway; UMP from uridine: step 1/1. The polypeptide is Uridine kinase (Clostridium botulinum (strain Langeland / NCTC 10281 / Type F)).